The primary structure comprises 225 residues: DNA repair protein RecO (225 aa).

The protein belongs to the RecO family.

Involved in DNA repair and RecF pathway recombination. This is DNA repair protein RecO from Clostridium perfringens (strain ATCC 13124 / DSM 756 / JCM 1290 / NCIMB 6125 / NCTC 8237 / Type A).